Consider the following 449-residue polypeptide: Type 3 secretion system ATPase (449 aa).

178 to 183 (GCGKTT) lines the ATP pocket.

It belongs to the ATPase alpha/beta chains family. T3SS ATPase subfamily. In terms of assembly, the core secretion machinery of the T3SS is composed of approximately 20 different proteins, including cytoplasmic components, a base, an export apparatus and a needle. This subunit is part of the cytosolic complex. Forms homododecamers.

The protein resides in the cytoplasm. It catalyses the reaction ATP + H2O + cellular proteinSide 1 = ADP + phosphate + cellular proteinSide 2.. In terms of biological role, ATPase component of the type III secretion system (T3SS), also called injectisome, which is used to inject bacterial effector proteins into eukaryotic host cells. Acts as a molecular motor to provide the energy that is required for the export of proteins. Required for type III secretion apparatus (T3SA) formation, proper protein secretion, host cell invasion and virulence. May play a critical role in T3SS substrate recognition, disassembly of the effector/chaperone complex and unfolding of the effector in an ATP-dependent manner prior to secretion. The chain is Type 3 secretion system ATPase from Pseudomonas syringae pv. tomato (strain ATCC BAA-871 / DC3000).